The chain runs to 181 residues: Photosystem I assembly protein Ycf4 (181 aa).

Helical transmembrane passes span 19 to 39 (YFWA…GISS) and 61 to 81 (IVMM…MATL).

It belongs to the Ycf4 family.

The protein resides in the plastid. Its subcellular location is the chloroplast thylakoid membrane. Seems to be required for the assembly of the photosystem I complex. The chain is Photosystem I assembly protein Ycf4 from Thalassiosira pseudonana (Marine diatom).